A 231-amino-acid chain; its full sequence is Chalcone--flavanone isomerase (231 aa).

Substrate is bound by residues threonine 46, asparagine 111, and serine 188.

It belongs to the chalcone isomerase family. Pericarp.

The catalysed reaction is a chalcone = a flavanone.. It participates in secondary metabolite biosynthesis; flavonoid biosynthesis. Functionally, catalyzes the intramolecular cyclization of bicyclic chalcones into tricyclic (S)-flavanones. Responsible for the isomerization of 4,2',4',6'-tetrahydroxychalcone (also termed chalcone) into naringenin. The polypeptide is Chalcone--flavanone isomerase (CHI) (Zea mays (Maize)).